Consider the following 249-residue polypeptide: 2,3-bisphosphoglycerate-dependent phosphoglycerate mutase (249 aa).

Residues 8–15, 21–22, Arg60, 87–90, Lys98, 114–115, and 183–184 contribute to the substrate site; these read RHGESVWN, TG, ERHY, RR, and GN. Catalysis depends on His9, which acts as the Tele-phosphohistidine intermediate. Catalysis depends on Glu87, which acts as the Proton donor/acceptor.

Belongs to the phosphoglycerate mutase family. BPG-dependent PGAM subfamily.

It catalyses the reaction (2R)-2-phosphoglycerate = (2R)-3-phosphoglycerate. The protein operates within carbohydrate degradation; glycolysis; pyruvate from D-glyceraldehyde 3-phosphate: step 3/5. Functionally, catalyzes the interconversion of 2-phosphoglycerate and 3-phosphoglycerate. The sequence is that of 2,3-bisphosphoglycerate-dependent phosphoglycerate mutase from Endomicrobium trichonymphae.